The following is a 235-amino-acid chain: Vinculin (235 aa).

It belongs to the vinculin/alpha-catenin family. In terms of assembly, exhibits self-association properties. In terms of processing, phosphorylated on serines, threonines and tyrosines. Post-translationally, acetylated by myristic acid and/or palmitic acid.

The protein resides in the cell membrane. It localises to the cell junction. It is found in the adherens junction. The protein localises to the focal adhesion. Its subcellular location is the cytoplasm. The protein resides in the cytoskeleton. It localises to the sarcolemma. It is found in the cell projection. The protein localises to the podosome. Its function is as follows. Involved in cell adhesion. May be involved in the attachment of the actin-based microfilaments to the plasma membrane. This is Vinculin (vcl) from Xenopus laevis (African clawed frog).